The following is a 201-amino-acid chain: Recombination protein RecR (201 aa).

A C4-type zinc finger spans residues 60–75 (CKSCGNIDTRNPCTVC). Residues 83–178 (SIIVVVADVA…KVTRLAHGVP (96 aa)) enclose the Toprim domain.

It belongs to the RecR family.

May play a role in DNA repair. It seems to be involved in an RecBC-independent recombinational process of DNA repair. It may act with RecF and RecO. This is Recombination protein RecR from Rhodopseudomonas palustris (strain BisB5).